The following is a 360-amino-acid chain: Decorin (360 aa).

The signal sequence occupies residues 1–16 (MKATIIFLLVAQVSWA). The propeptide occupies 17 to 30 (GPFQQKGLFDFMLE). The O-linked (Xyl...) (glycosaminoglycan) serine glycan is linked to serine 34. 2 disulfides stabilise this stretch: cysteine 55–cysteine 61 and cysteine 59–cysteine 68. LRR repeat units lie at residues 74–94 (EKVPKDLPPDTALLDLQNNKI), 95–118 (TEIKDGDFKNLKNLHTLILINNKI), 119–142 (SKISPGAFAPLVKLERLYLSKNQL), 143–163 (KELPEKMPKTLQELRVHENEI), 164–187 (TKVRKSVFNGLNQMIVVELGTNPL), 188–213 (KSSGIENGAFQGMKKLSYIRIADTNI), 214–234 (TTIPQGLPPSLTELHLDGNKI), 235–258 (TKVDAASLKGLNNLAKLGLSFNSI), 259–282 (SAVDNGSLANTPHLRELHLNNNKL), 283–305 (VKVPGGLADHKYIQVVYLHNNNI), 306–335 (SAIGSNDFCPPGYNTKKASYSGVSLFSNPV), and 336–360 (QYWEIQPSTFRCVYVRAAVQLGNYK). Asparagine 212 is a glycosylation site (N-linked (GlcNAc...) asparagine). N-linked (GlcNAc...) asparagine glycosylation is found at asparagine 263 and asparagine 304. The cysteines at positions 314 and 347 are disulfide-linked.

It belongs to the small leucine-rich proteoglycan (SLRP) family. SLRP class I subfamily. In terms of assembly, binds to type I and type II collagen, fibronectin and TGF-beta. Forms a ternary complex with MFAP2 and ELN. Interacts with DPT. The attached glycosaminoglycan chain can be either chondroitin 4-sulfate, chondroitin 6-sulfate or dermatan sulfate, depending upon the tissue of origin.

The protein localises to the secreted. Its subcellular location is the extracellular space. It is found in the extracellular matrix. In terms of biological role, may affect the rate of fibrils formation. This chain is Decorin (DCN), found in Bos taurus (Bovine).